The chain runs to 244 residues: MTDLPEKEGGRFHASVLTLYPEMFPGPLGISLAGKALAEGKWQLDTVQIRDFAEGRHRMVDDTPSGGGAGMVMKADVVARALDSVDDGRPMLLMTPRGKPLTQERVRALADGAGAIILCGRFEGVDERVIEGRNLEEISIGDYILSGGETAAIVLLDAVVRLLPGVMGNRESGETESFETGLLEHPHYTRPQEWEGRAIPDILTSGNHGAIDKWRLEQAERITRERRPDLWEAYCKNRRKIGGQ.

S-adenosyl-L-methionine contacts are provided by residues Gly-120 and 140 to 145 (IGDYIL).

The protein belongs to the RNA methyltransferase TrmD family. As to quaternary structure, homodimer.

The protein localises to the cytoplasm. It catalyses the reaction guanosine(37) in tRNA + S-adenosyl-L-methionine = N(1)-methylguanosine(37) in tRNA + S-adenosyl-L-homocysteine + H(+). Its function is as follows. Specifically methylates guanosine-37 in various tRNAs. In Brucella abortus (strain S19), this protein is tRNA (guanine-N(1)-)-methyltransferase.